The primary structure comprises 278 residues: MPIAPSTYYDHINREPSRRELRDGELKEHISRVHAANYGVYGARKVWLTLNREGIEVARCTVERLMTKLGLSGTTRGKARRTTIADPATARPADLVQRRFGPPAPNRLWVADLTYVSTWAGFAYVAFVTDAYARRILGWRVASTMATSMVLDAIEQAIWTRQQEGVLDLKDVIHHTDRGSQYTSIRFSERLAEAGIQPSVGAVGSSYDNALAETINGLYKTELIKPGKPWRSIEDVELATARWVDWFNHRRLYQYCGDVPPVELEAAYYAQRQRPAAG.

The Integrase catalytic domain maps to 101–268; that stretch reads GPPAPNRLWV…VPPVELEAAY (168 aa).

Its function is as follows. Involved in the transposition of the insertion sequence. This is Putative transposase for insertion sequence element IS986/IS6110 from Mycobacterium bovis (strain ATCC BAA-935 / AF2122/97).